A 585-amino-acid chain; its full sequence is Arginine--tRNA ligase (585 aa).

Positions 126–136 (PNIAKEMHVGH) match the 'HIGH' region motif.

Belongs to the class-I aminoacyl-tRNA synthetase family. Monomer.

The protein localises to the cytoplasm. The catalysed reaction is tRNA(Arg) + L-arginine + ATP = L-arginyl-tRNA(Arg) + AMP + diphosphate. In Crocosphaera subtropica (strain ATCC 51142 / BH68) (Cyanothece sp. (strain ATCC 51142)), this protein is Arginine--tRNA ligase.